Here is a 219-residue protein sequence, read N- to C-terminus: MSRTFRAWQCVGALCALSPLLPAYSSEGVREVPPSQSPQVVVAYEPIRPGDQLLKIGIVAGCQLYIAGGNGTNGSSSSGTNGNGNGKLLGGGGFHLGYEYFFTKNFSLGGQVSFECYRTTGSNYYFSVPITVNPTYTFAVGRWRIPLSLGVGLNIQSYLSKKAPGLIAEASAGLYYQYTPDWSIGGIVAYTQLGDIASSPDKCRAVGLATIDFGVRYHF.

To T.pallidum TP_0126.

This is an uncharacterized protein from Treponema pallidum (strain Nichols).